The sequence spans 105 residues: Thioredoxin (105 aa).

The Thioredoxin domain occupies 2–105 (VKQIESKTAF…KLEATINELV (104 aa)). At Lys-3 the chain carries N6-acetyllysine. Lys-8 is subject to N6-succinyllysine. Residues Cys-32 and Cys-35 each act as nucleophile in the active site. Residues Cys-32 and Cys-35 are joined by a disulfide bond. N6-acetyllysine is present on Lys-39. Cys-62 and Cys-69 each carry S-nitrosocysteine. The residue at position 73 (Cys-73) is an S-nitrosocysteine; alternate. Lys-94 is subject to N6-acetyllysine; alternate. An N6-succinyllysine; alternate modification is found at Lys-94.

It belongs to the thioredoxin family. Homodimer; disulfide-linked. Interacts with TXNIP through the redox-active site. Interacts with MAP3K5 and CASP3. In case of infection, interacts with S.typhimurium protein slrP. Interacts with APEX1; the interaction stimulates the FOS/JUN AP-1 DNA-binding activity in a redox-dependent manner. In the fully reduced protein, both Cys-69 and Cys-73 are nitrosylated in response to nitric oxide (NO). When two disulfide bonds are present in the protein, only Cys-73 is nitrosylated. Cys-73 can serve as donor for nitrosylation of target proteins. In terms of processing, in case of infection, ubiquitinated by S.typhimurium protein slrP, leading to its degradation.

It localises to the nucleus. Its subcellular location is the cytoplasm. The protein localises to the secreted. Participates in various redox reactions through the reversible oxidation of its active center dithiol to a disulfide and catalyzes dithiol-disulfide exchange reactions. Plays a role in the reversible S-nitrosylation of cysteine residues in target proteins, and thereby contributes to the response to intracellular nitric oxide. Nitrosylates the active site Cys of CASP3 in response to nitric oxide (NO), and thereby inhibits caspase-3 activity. Induces the FOS/JUN AP-1 DNA-binding activity in ionizing radiation (IR) cells through its oxidation/reduction status and stimulates AP-1 transcriptional activity. Its function is as follows. ADF augments the expression of the interleukin-2 receptor TAC (IL2R/P55). The protein is Thioredoxin (TXN) of Homo sapiens (Human).